We begin with the raw amino-acid sequence, 273 residues long: Formamidopyrimidine-DNA glycosylase (273 aa).

Proline 2 serves as the catalytic Schiff-base intermediate with DNA. Glutamate 3 serves as the catalytic Proton donor. Residue lysine 58 is the Proton donor; for beta-elimination activity of the active site. DNA-binding residues include histidine 92, arginine 111, and lysine 153. The FPG-type zinc-finger motif lies at 238-272; sequence MVYARDGQECLSCSSSIIKTKHSGRSTFYCKSCQK. Arginine 262 serves as the catalytic Proton donor; for delta-elimination activity.

Belongs to the FPG family. In terms of assembly, monomer. Requires Zn(2+) as cofactor.

It catalyses the reaction Hydrolysis of DNA containing ring-opened 7-methylguanine residues, releasing 2,6-diamino-4-hydroxy-5-(N-methyl)formamidopyrimidine.. The catalysed reaction is 2'-deoxyribonucleotide-(2'-deoxyribose 5'-phosphate)-2'-deoxyribonucleotide-DNA = a 3'-end 2'-deoxyribonucleotide-(2,3-dehydro-2,3-deoxyribose 5'-phosphate)-DNA + a 5'-end 5'-phospho-2'-deoxyribonucleoside-DNA + H(+). In terms of biological role, involved in base excision repair of DNA damaged by oxidation or by mutagenic agents. Acts as a DNA glycosylase that recognizes and removes damaged bases. Has a preference for oxidized purines, such as 7,8-dihydro-8-oxoguanine (8-oxoG). Has AP (apurinic/apyrimidinic) lyase activity and introduces nicks in the DNA strand. Cleaves the DNA backbone by beta-delta elimination to generate a single-strand break at the site of the removed base with both 3'- and 5'-phosphates. This is Formamidopyrimidine-DNA glycosylase from Rickettsia bellii (strain OSU 85-389).